Here is a 265-residue protein sequence, read N- to C-terminus: Endochitinase At2g43580 (265 aa).

Positions 1 to 24 (MALTKIFLILLLSLLGLYSETVKS) are cleaved as a signal peptide. The region spanning 25 to 59 (QNCDCAPNLCCSQFGYCGTTADYCGSTCQSGPCRV) is the Chitin-binding type-1 domain. Intrachain disulfides connect Cys-27/Cys-35, Cys-29/Cys-41, Cys-34/Cys-48, and Cys-52/Cys-57. The segment at 67–265 (GLVGNIVTQI…GLDPGANITC (199 aa)) is catalytic. N-linked (GlcNAc...) asparagine glycosylation occurs at Asn-102. Glu-129 functions as the Proton donor in the catalytic mechanism. Asn-262 carries an N-linked (GlcNAc...) asparagine glycan.

Belongs to the glycosyl hydrolase 19 family. Chitinase class I subfamily.

It catalyses the reaction Random endo-hydrolysis of N-acetyl-beta-D-glucosaminide (1-&gt;4)-beta-linkages in chitin and chitodextrins.. In Arabidopsis thaliana (Mouse-ear cress), this protein is Endochitinase At2g43580.